A 467-amino-acid chain; its full sequence is Ribulose bisphosphate carboxylase large chain (467 aa).

K5 is modified (N6,N6,N6-trimethyllysine). The substrate site is built by N114 and T164. Catalysis depends on K166, which acts as the Proton acceptor. K168 contacts substrate. The Mg(2+) site is built by K192, D194, and E195. Position 192 is an N6-carboxylysine (K192). Catalysis depends on H285, which acts as the Proton acceptor. 3 residues coordinate substrate: R286, H318, and S370.

Belongs to the RuBisCO large chain family. Type I subfamily. As to quaternary structure, heterohexadecamer of 8 large chains and 8 small chains; disulfide-linked. The disulfide link is formed within the large subunit homodimers. The cofactor is Mg(2+). Post-translationally, the disulfide bond which can form in the large chain dimeric partners within the hexadecamer appears to be associated with oxidative stress and protein turnover.

It localises to the plastid. Its subcellular location is the chloroplast. It carries out the reaction 2 (2R)-3-phosphoglycerate + 2 H(+) = D-ribulose 1,5-bisphosphate + CO2 + H2O. It catalyses the reaction D-ribulose 1,5-bisphosphate + O2 = 2-phosphoglycolate + (2R)-3-phosphoglycerate + 2 H(+). Its function is as follows. RuBisCO catalyzes two reactions: the carboxylation of D-ribulose 1,5-bisphosphate, the primary event in carbon dioxide fixation, as well as the oxidative fragmentation of the pentose substrate in the photorespiration process. Both reactions occur simultaneously and in competition at the same active site. The protein is Ribulose bisphosphate carboxylase large chain of Scutellaria bolanderi (Sierra skullcap).